The primary structure comprises 552 residues: Transcription factor lcsF (552 aa).

4 disordered regions span residues 1 to 132 (MAPA…DLDP), 169 to 209 (TSSY…ASLS), 232 to 258 (EATS…HWSS), and 297 to 349 (ELTS…QHGA). Positions 31–55 (KDRKEKKRIQNRVAQRSYRSRMKAR) are basic motif. The region spanning 31–76 (KDRKEKKRIQNRVAQRSYRSRMKARLGELQSRLQAHEEQKAKEEAE) is the bZIP domain. Residues 56-63 (LGELQSRL) are leucine-zipper. Over residues 64 to 79 (QAHEEQKAKEEAERCD) the composition is skewed to basic and acidic residues. 2 stretches are compositionally biased toward polar residues: residues 98 to 119 (TPPS…NSAS) and 169 to 186 (TSSY…SLSQ). The segment covering 298–347 (LTSTGDLPNATWRPSQQFSGPETTPRSHNAENPTQQQSPINDDTPSTTQH) has biased composition (polar residues).

Belongs to the bZIP family.

Its subcellular location is the nucleus. Functionally, transcription factor that regulates the expression of the gene cluster that mediates the biosynthesis of the lipopeptide antibiotics leucinostatins that show extensive biological activities, including antimalarial, antiviral, antibacterial, antifungal, and antitumor activities, as well as phytotoxic. All 20 genes in the cluster are up-regulated to some extent by lcsF, with the exception of lcsL and lcsP, which are down-regulated. The protein is Transcription factor lcsF of Purpureocillium lilacinum (Paecilomyces lilacinus).